The sequence spans 132 residues: Chemokine-like protein TAFA-5 (132 aa).

Positions methionine 1–glycine 43 are cleaved as a signal peptide. A glycan (N-linked (GlcNAc...) asparagine) is linked at asparagine 113.

It belongs to the TAFA family. As to expression, expressed in the subcutaneous, brown, epididymal and perirenal adipose tissue (at protein level).

The protein localises to the secreted. Its function is as follows. Acts as a chemokine-like protein by regulating cell proliferation and migration through activation of G protein-coupled receptors (GPCRs), such as S1PR2 and FPR2. Stimulates chemotactic migration of macrophages mediated by the MAPK3/ERK1 and AKT1 pathway. Blocks TNFSF11/RANKL-induced osteoclast formation from macrophages by inhibiting up-regulation of osteoclast fusogenic and differentiation genes. Stimulation of macrophage migration and inhibition of osteoclast formation is mediated through the GPCR FPR2. Acts as an adipokine by negatively regulating vascular smooth muscle cell (VSMC) proliferation and migration in response to platelet-derived growth factor stimulation via GPCR S1PR2 and G protein GNA12/GNA13-transmitted RHOA signaling. Inhibits injury-induced cell proliferation and neointima formation in the femoral arteries. In Mus musculus (Mouse), this protein is Chemokine-like protein TAFA-5 (Tafa5).